We begin with the raw amino-acid sequence, 517 residues long: Putative thymidine phosphorylase (517 aa).

It belongs to the thymidine/pyrimidine-nucleoside phosphorylase family. Type 2 subfamily.

The enzyme catalyses thymidine + phosphate = 2-deoxy-alpha-D-ribose 1-phosphate + thymine. The polypeptide is Putative thymidine phosphorylase (Legionella pneumophila (strain Corby)).